The following is a 103-amino-acid chain: Small ribosomal subunit protein uS10 (103 aa).

The protein belongs to the universal ribosomal protein uS10 family. Part of the 30S ribosomal subunit.

Its function is as follows. Involved in the binding of tRNA to the ribosomes. The protein is Small ribosomal subunit protein uS10 of Syntrophobacter fumaroxidans (strain DSM 10017 / MPOB).